We begin with the raw amino-acid sequence, 391 residues long: Probable sugar efflux transporter (391 aa).

Transmembrane regions (helical) follow at residues 16–36 (VFVFSLSAFIFNTTEFVPVAL), 51–71 (VGLMITAYAWVVSLGSLPLML), 82–102 (LLFLFALFILSHILSALAWNF), 103–123 (WVLLISRMGIAFAHSIFWSIT), 138–158 (QALGLLALGSSLAMILGLPLG), 170–190 (TFGVIGGVATLIMLLMWKLLP), 210–230 (PLLVGIYLLVIMVISGHFTTY), 247–267 (ITTLMLFVFGLAGVAGSFLFG), 277–297 (FIAFAMVLVICPQLLLFVFKN), 300–320 (WVIFLQIFLWGIGITSLTIAL), 338–358 (IFSGSYNVGIGSGALFGSIVI), and 361–381 (LGLEYIGFVGGALGLLALFWL).

Belongs to the major facilitator superfamily. SotB (TC 2.A.1.2) family.

It is found in the cell inner membrane. Functionally, involved in the efflux of sugars. The physiological role may be the reduction of the intracellular concentration of toxic sugars or sugar metabolites. This chain is Probable sugar efflux transporter, found in Helicobacter pylori (strain P12).